Reading from the N-terminus, the 463-residue chain is Endoglucanase (463 aa).

The first 27 residues, 1–27, serve as a signal peptide directing secretion; that stretch reads MVEKRKIFTVLCACGIGFTSYTSCISA. Positions 28–55 are excised as a propeptide; it reads AAIDNDTLINNGHKINSSIITNSSQVSA. Glu-130 acts as the Proton donor in catalysis. Asp-191 acts as the Nucleophile in catalysis.

This sequence belongs to the glycosyl hydrolase 8 (cellulase D) family. The N- and the C-terminus may be subjected to proteolysis.

It carries out the reaction Endohydrolysis of (1-&gt;4)-beta-D-glucosidic linkages in cellulose, lichenin and cereal beta-D-glucans.. The sequence is that of Endoglucanase from Bacillus sp. (strain KSM-330).